We begin with the raw amino-acid sequence, 185 residues long: Ribosome-recycling factor (185 aa).

The protein belongs to the RRF family.

Its subcellular location is the cytoplasm. Functionally, responsible for the release of ribosomes from messenger RNA at the termination of protein biosynthesis. May increase the efficiency of translation by recycling ribosomes from one round of translation to another. The polypeptide is Ribosome-recycling factor (Campylobacter lari (strain RM2100 / D67 / ATCC BAA-1060)).